A 118-amino-acid chain; its full sequence is Non-specific lipid-transfer protein 2A (118 aa).

Residues 1–26 (MARAQLVLVALVAAALLLAGPHTTMA) form the signal peptide. 4 cysteine pairs are disulfide-bonded: cysteine 30–cysteine 77, cysteine 40–cysteine 54, cysteine 55–cysteine 100, and cysteine 75–cysteine 114.

Belongs to the plant LTP family.

Its function is as follows. Plant non-specific lipid-transfer proteins transfer phospholipids as well as galactolipids across membranes. May play a role in wax or cutin deposition in the cell walls of expanding epidermal cells and certain secretory tissues. The polypeptide is Non-specific lipid-transfer protein 2A (LTP2-A) (Oryza sativa subsp. japonica (Rice)).